The primary structure comprises 282 residues: DNA-binding transcriptional repressor YiaJ (282 aa).

Residues 1 to 20 (MGKEVMGKKENEMAQEKERP) are compositionally biased toward basic and acidic residues. The interval 1–21 (MGKEVMGKKENEMAQEKERPA) is disordered. In terms of domain architecture, HTH iclR-type spans 23–85 (SQSLFRGLML…PAAGSYRLTT (63 aa)). A DNA-binding region (H-T-H motif) is located at residues 45-64 (LAHLSELAGLNKSTVHRLLQ). Residues 100-272 (IIHIAAPHLE…AQAISNELGF (173 aa)) enclose the IclR-ED domain.

Functionally, negatively controls the transcription of the yiaKLMNOPQRS operon, which may be involved in the utilization of 2,3-diketo-L-gulonate. The chain is DNA-binding transcriptional repressor YiaJ (yiaJ) from Escherichia coli (strain K12).